Reading from the N-terminus, the 201-residue chain is MLDLGWSEILVIAVVLIVVVGPKDLPRVLRSFGRTTAKMRAMAGDFRRQFDEALREAELDDMKGLVDDVRKLDPRSEIRKHLSPLEEAGKEIRSGLSEAAKAKPAASSLPAADSKPAEPLKNGATSLGPEAPPPVTGETAAPKVSEKAEVGAVAASPGTSAKQAAPKAKAAAAAKAPTKNTASAPAKKPSPRRKKTAGTAP.

Residues 1–21 (MLDLGWSEILVIAVVLIVVVG) form a helical membrane-spanning segment. The interval 96–201 (LSEAAKAKPA…RRKKTAGTAP (106 aa)) is disordered. Composition is skewed to low complexity over residues 102–114 (AKPA…AADS) and 159–187 (TSAK…APAK). Over residues 189 to 201 (PSPRRKKTAGTAP) the composition is skewed to basic residues.

It belongs to the TatB family. In terms of assembly, the Tat system comprises two distinct complexes: a TatABC complex, containing multiple copies of TatA, TatB and TatC subunits, and a separate TatA complex, containing only TatA subunits. Substrates initially bind to the TatABC complex, which probably triggers association of the separate TatA complex to form the active translocon.

Its subcellular location is the cell inner membrane. Its function is as follows. Part of the twin-arginine translocation (Tat) system that transports large folded proteins containing a characteristic twin-arginine motif in their signal peptide across membranes. Together with TatC, TatB is part of a receptor directly interacting with Tat signal peptides. TatB may form an oligomeric binding site that transiently accommodates folded Tat precursor proteins before their translocation. The chain is Sec-independent protein translocase protein TatB from Chelativorans sp. (strain BNC1).